The sequence spans 476 residues: uncharacterized protein (476 aa).

The next 10 membrane-spanning stretches (helical) occupy residues 4–24 (FFSF…LFGA), 81–101 (ALAI…AAFI), 141–161 (WMGV…FSGV), 174–194 (FDFP…LAIT), 207–227 (FVPL…VMNI), 233–253 (VIWS…GAAG), 300–320 (MIGI…LILL), 351–371 (FVTL…YIYA), 391–411 (ICTF…MWQL), and 414–434 (IIMA…SPVV).

The protein belongs to the alanine or glycine:cation symporter (AGCS) (TC 2.A.25) family.

The protein localises to the cell inner membrane. This is an uncharacterized protein from Escherichia coli (strain K12).